A 208-amino-acid chain; its full sequence is Ribosomal RNA large subunit methyltransferase E (208 aa).

G63, W65, D83, D99, and D124 together coordinate S-adenosyl-L-methionine. K164 (proton acceptor) is an active-site residue.

Belongs to the class I-like SAM-binding methyltransferase superfamily. RNA methyltransferase RlmE family.

Its subcellular location is the cytoplasm. The enzyme catalyses uridine(2552) in 23S rRNA + S-adenosyl-L-methionine = 2'-O-methyluridine(2552) in 23S rRNA + S-adenosyl-L-homocysteine + H(+). Specifically methylates the uridine in position 2552 of 23S rRNA at the 2'-O position of the ribose in the fully assembled 50S ribosomal subunit. The chain is Ribosomal RNA large subunit methyltransferase E from Salmonella typhi.